A 106-amino-acid chain; its full sequence is Ribonuclease P protein component 4 (106 aa).

Positions 62, 65, 88, and 91 each coordinate Zn(2+).

It belongs to the eukaryotic/archaeal RNase P protein component 4 family. Consists of a catalytic RNA component and at least 4-5 protein subunits. The cofactor is Zn(2+).

The protein localises to the cytoplasm. The catalysed reaction is Endonucleolytic cleavage of RNA, removing 5'-extranucleotides from tRNA precursor.. Its function is as follows. Part of ribonuclease P, a protein complex that generates mature tRNA molecules by cleaving their 5'-ends. The protein is Ribonuclease P protein component 4 of Methanocorpusculum labreanum (strain ATCC 43576 / DSM 4855 / Z).